We begin with the raw amino-acid sequence, 363 residues long: Type-2 angiotensin II receptor (363 aa).

The Extracellular segment spans residues 1–45; the sequence is MKDNFSFAATSRNITSSRPFDNLNATGTNESAFNCSHKPSDKHLE. Asparagine 4, asparagine 13, asparagine 24, asparagine 29, and asparagine 34 each carry an N-linked (GlcNAc...) asparagine glycan. 2 cysteine pairs are disulfide-bonded: cysteine 35/cysteine 290 and cysteine 117/cysteine 195. A helical membrane pass occupies residues 46 to 70; sequence AIPVLYYMIFVIGFAVNIVVVSLFC. Over 71 to 80 the chain is Cytoplasmic; that stretch reads CQKGPKKVSS. Residues 81-104 form a helical membrane-spanning segment; it reads IYIFNLALADLLLLATLPLWATYY. Residues tyrosine 103 and tyrosine 104 each contribute to the angiotensin II site. Residues 105–114 lie on the Extracellular side of the membrane; sequence SYRYDWLFGP. A helical membrane pass occupies residues 115 to 140; that stretch reads VMCKVFGSFLTLNMFASIFFITCMSV. At 141–159 the chain is on the cytoplasmic side; that stretch reads DRYQSVIYPFLSQRRNPWQ. Residues 160 to 181 traverse the membrane as a helical segment; sequence ASYVVPLVWCMACLSSLPTFYF. Angiotensin II is bound by residues arginine 182, tyrosine 204, and lysine 215. Residues 182-206 lie on the Extracellular side of the membrane; the sequence is RDVRTIEYLGVNACIMAFPPEKYAQ. Residues 207–232 traverse the membrane as a helical segment; the sequence is WSAGIALMKNILGFIIPLIFIATCYF. Residues 233-257 lie on the Cytoplasmic side of the membrane; the sequence is GIRKHLLKTNSYGKNRITRDQVLKM. The helical transmembrane segment at 258-281 threads the bilayer; it reads AAAVVLAFIICWLPFHVLTFLDAL. Aspartate 279 contributes to the angiotensin II binding site. Residues 282–294 lie on the Extracellular side of the membrane; the sequence is TWMGIINSCEVIA. The helical transmembrane segment at 295–320 threads the bilayer; that stretch reads VIDLALPFAILLGFTNSCVNPFLYCF. An angiotensin II-binding site is contributed by aspartate 297. Residues 321-363 lie on the Cytoplasmic side of the membrane; it reads VGNRFQQKLRSVFRVPITWLQGKRETMSCRKGSSLREMDTFVS. Residues 324 to 333 are helix VIII; sequence RFQQKLRSVF. Serine 354 bears the Phosphoserine; by PKC mark.

This sequence belongs to the G-protein coupled receptor 1 family. Interacts with MTUS1. In terms of tissue distribution, expressed at highest levels in adrenal gland and uterus.

The protein localises to the cell membrane. Functionally, receptor for angiotensin II, a vasoconstricting peptide. Signals primarily via a non-canonical G-protein- and beta-arrestin independent pathways. Cooperates with MTUS1 to inhibit ERK2 activation and cell proliferation. The protein is Type-2 angiotensin II receptor of Mus musculus (Mouse).